Consider the following 216-residue polypeptide: 4-hydroxy-tetrahydrodipicolinate reductase (216 aa).

NAD(+)-binding positions include 7-12 (GYSGRM), 71-73 (GTT), and 95-98 (AYNF). The active-site Proton donor/acceptor is the histidine 127. Histidine 128 serves as a coordination point for (S)-2,3,4,5-tetrahydrodipicolinate. Residue lysine 131 is the Proton donor of the active site. (S)-2,3,4,5-tetrahydrodipicolinate is bound at residue 137-138 (GT).

This sequence belongs to the DapB family.

Its subcellular location is the cytoplasm. The catalysed reaction is (S)-2,3,4,5-tetrahydrodipicolinate + NAD(+) + H2O = (2S,4S)-4-hydroxy-2,3,4,5-tetrahydrodipicolinate + NADH + H(+). It carries out the reaction (S)-2,3,4,5-tetrahydrodipicolinate + NADP(+) + H2O = (2S,4S)-4-hydroxy-2,3,4,5-tetrahydrodipicolinate + NADPH + H(+). It participates in amino-acid biosynthesis; L-lysine biosynthesis via DAP pathway; (S)-tetrahydrodipicolinate from L-aspartate: step 4/4. In terms of biological role, catalyzes the conversion of 4-hydroxy-tetrahydrodipicolinate (HTPA) to tetrahydrodipicolinate. In Thermotoga sp. (strain RQ2), this protein is 4-hydroxy-tetrahydrodipicolinate reductase.